Reading from the N-terminus, the 590-residue chain is MNKLIKEKLSVLPDQPGCYLMKDRQNTVIYVGKAKILKNRVRSYFTGSHDAKTQRLVSEIEDFEYIVTSSNIEALILELNLIKKYDPKYNVMLKDDKTYPFIKITNERHPKLIVTRHVKKDKGKYFGPYPNVQAARETKKLLDRLYPLRKCATLPDRVCLYYHLGQCLAPCVYDISEETNKQLVDEIIRFLNGGHQQIKKELTEKMQEAAEQLEFERAKELRDQIAYIDSTMEKQKMTMSDLSDRDVFAYAYDKGWMCVQVFFIRQGKLIERDVSLFPMYQDPEEEFLTFMGQFYSKNNHFLPKEILVPDSVDQEMIEQLLETNVHQPKKGKKKDLLLLAHQNAKIALKEKFSLIERDEERSIGAVKQLGDALNIYMPYRIEAFDNSNIQGADPVSAMVVFQDGKPYKKEYRKYKIKTVTGPDDYASMREVIRRRYTRVLKDELPLPDLILIDGGKGQINAAIDVLENELNLSVPVAGLVKDEKHRTSNLMMGDTLEIVALERNSQAFYLLQRIQDEVHRFAISFHRQLRGKNAFQSILDDVPGIGEKRKKQLLKHFGSVKKMKEATIEDFQEAGIPKQTAELLIEALKK.

In terms of domain architecture, GIY-YIG spans 14 to 91 (DQPGCYLMKD…IKKYDPKYNV (78 aa)). Positions 196–231 (QQIKKELTEKMQEAAEQLEFERAKELRDQIAYIDST) constitute a UVR domain.

Belongs to the UvrC family. Interacts with UvrB in an incision complex.

It is found in the cytoplasm. The UvrABC repair system catalyzes the recognition and processing of DNA lesions. UvrC both incises the 5' and 3' sides of the lesion. The N-terminal half is responsible for the 3' incision and the C-terminal half is responsible for the 5' incision. This is UvrABC system protein C from Bacillus pumilus (strain SAFR-032).